The following is a 398-amino-acid chain: MESVLSKYENQITIFTDYLEEYPDTDELVWILGKQHLLKTEKSKLLSDISARLWFTYRRKFSPIGGTGPSSDAGWGCMLRCGQMMLAQALICRHLGRDWSWEKQKEQPKEYQRILQCFLDRKDCCYSIHQMAQMGVGEGKSIGEWFGPNTVAQVLKKLALFDEWNSLAVYVSMDNTVVIEDIKKMCRVLPLGADTAGDRPPDSLTASNLSKGTSAYCSAWKPLLLIVPLRLGINQINPVYVDAFKECFKMPQSLGALGGKPNNAYYFIGFLGDELIFLDPHTTQTFVDTGENGTVNDQTFHCLQSPQRMNILNLDPSVALGFFCKEEKDFDNWCSLVQKEILKENLRMFELVQKHPSHWPPFVPPAKPEVTTTGAEFIDSTEQLEEFDLEEDFEILSV.

C77 serves as the catalytic Nucleophile. Active-site residues include D279 and H281. Residues 393 to 396 (FEIL) carry the LIR motif.

This sequence belongs to the peptidase C54 family. Interacts with ATG9A; the interaction is direct.

The protein resides in the cytoplasm. The enzyme catalyses [protein]-C-terminal L-amino acid-glycyl-phosphatidylethanolamide + H2O = [protein]-C-terminal L-amino acid-glycine + a 1,2-diacyl-sn-glycero-3-phosphoethanolamine. With respect to regulation, inhibited by N-ethylmaleimide. Redox-regulated during autophagy since reducing conditions activate ATG4A whereas an oxidizing environment such as the presence of H(2)O(2) inhibits its activity. Its function is as follows. Cysteine protease that plays a key role in autophagy by mediating both proteolytic activation and delipidation of ATG8 family proteins. The protease activity is required for proteolytic activation of ATG8 family proteins: cleaves the C-terminal amino acid of ATG8 proteins to reveal a C-terminal glycine. Exposure of the glycine at the C-terminus is essential for ATG8 proteins conjugation to phosphatidylethanolamine (PE) and insertion to membranes, which is necessary for autophagy. Preferred substrate is GABARAPL2 followed by MAP1LC3A and GABARAP. Protease activity is also required to counteract formation of high-molecular weight conjugates of ATG8 proteins (ATG8ylation): acts as a deubiquitinating-like enzyme that removes ATG8 conjugated to other proteins, such as ATG3. In addition to the protease activity, also mediates delipidation of ATG8 family proteins. Catalyzes delipidation of PE-conjugated forms of ATG8 proteins during macroautophagy. Compared to ATG4B, the major protein for proteolytic activation of ATG8 proteins, shows weaker ability to cleave the C-terminal amino acid of ATG8 proteins, while it displays stronger delipidation activity. Involved in phagophore growth during mitophagy independently of its protease activity and of ATG8 proteins: acts by regulating ATG9A trafficking to mitochondria and promoting phagophore-endoplasmic reticulum contacts during the lipid transfer phase of mitophagy. This chain is Cysteine protease ATG4A, found in Pongo abelii (Sumatran orangutan).